Consider the following 453-residue polypeptide: UDP-N-acetylmuramate--L-alanine ligase (453 aa).

An ATP-binding site is contributed by 112 to 118 (GTHGKTT).

Belongs to the MurCDEF family.

The protein resides in the cytoplasm. It catalyses the reaction UDP-N-acetyl-alpha-D-muramate + L-alanine + ATP = UDP-N-acetyl-alpha-D-muramoyl-L-alanine + ADP + phosphate + H(+). Its pathway is cell wall biogenesis; peptidoglycan biosynthesis. Cell wall formation. The polypeptide is UDP-N-acetylmuramate--L-alanine ligase (Lawsonia intracellularis (strain PHE/MN1-00)).